A 233-amino-acid polypeptide reads, in one-letter code: Ribonuclease 3 (233 aa).

The region spanning 4–126 is the RNase III domain; the sequence is LNKLMERLGH…IVGSIYIDAG (123 aa). Glutamate 39 provides a ligand contact to Mg(2+). The active site involves aspartate 43. The Mg(2+) site is built by aspartate 112 and glutamate 115. Glutamate 115 is an active-site residue. In terms of domain architecture, DRBM spans 153–222; it reads DAKSLLQEWL…AKRFLELLDD (70 aa).

It belongs to the ribonuclease III family. In terms of assembly, homodimer. Mg(2+) serves as cofactor.

It is found in the cytoplasm. The enzyme catalyses Endonucleolytic cleavage to 5'-phosphomonoester.. In terms of biological role, digests double-stranded RNA. Involved in the processing of primary rRNA transcript to yield the immediate precursors to the large and small rRNAs (23S and 16S). Processes some mRNAs, and tRNAs when they are encoded in the rRNA operon. Processes pre-crRNA and tracrRNA of type II CRISPR loci if present in the organism. In Coxiella burnetii (strain CbuG_Q212) (Coxiella burnetii (strain Q212)), this protein is Ribonuclease 3.